Reading from the N-terminus, the 106-residue chain is UPF0145 protein PputW619_2377 (106 aa).

The protein belongs to the UPF0145 family.

This chain is UPF0145 protein PputW619_2377, found in Pseudomonas putida (strain W619).